Here is a 185-residue protein sequence, read N- to C-terminus: UPF0669 protein C6orf120 homolog (185 aa).

An N-terminal signal peptide occupies residues 1-23; it reads MATPWRRALLMILASQVVTLVKC. The N-linked (GlcNAc...) asparagine glycan is linked to Asn47.

This sequence belongs to the UPF0669 family.

The protein resides in the secreted. Functionally, may be involved in induction of apoptosis in CD4(+) T-cells, but not CD8(+) T-cells or hepatocytes. The chain is UPF0669 protein C6orf120 homolog from Mus musculus (Mouse).